The primary structure comprises 258 residues: Imidazole glycerol phosphate synthase subunit HisF (258 aa).

Catalysis depends on residues D12 and D131.

It belongs to the HisA/HisF family. Heterodimer of HisH and HisF.

The protein resides in the cytoplasm. It carries out the reaction 5-[(5-phospho-1-deoxy-D-ribulos-1-ylimino)methylamino]-1-(5-phospho-beta-D-ribosyl)imidazole-4-carboxamide + L-glutamine = D-erythro-1-(imidazol-4-yl)glycerol 3-phosphate + 5-amino-1-(5-phospho-beta-D-ribosyl)imidazole-4-carboxamide + L-glutamate + H(+). The protein operates within amino-acid biosynthesis; L-histidine biosynthesis; L-histidine from 5-phospho-alpha-D-ribose 1-diphosphate: step 5/9. Functionally, IGPS catalyzes the conversion of PRFAR and glutamine to IGP, AICAR and glutamate. The HisF subunit catalyzes the cyclization activity that produces IGP and AICAR from PRFAR using the ammonia provided by the HisH subunit. This is Imidazole glycerol phosphate synthase subunit HisF from Sinorhizobium medicae (strain WSM419) (Ensifer medicae).